The sequence spans 35 residues: Dermonecrotic toxin LrSicTox-alphaI-1 (35 aa).

Residue His11 is part of the active site. Asp33 is a binding site for Mg(2+).

It belongs to the arthropod phospholipase D family. Class II subfamily. It depends on Mg(2+) as a cofactor. Contains 2 disulfide bonds. As to expression, expressed by the venom gland.

The protein localises to the secreted. It carries out the reaction an N-(acyl)-sphingosylphosphocholine = an N-(acyl)-sphingosyl-1,3-cyclic phosphate + choline. It catalyses the reaction an N-(acyl)-sphingosylphosphoethanolamine = an N-(acyl)-sphingosyl-1,3-cyclic phosphate + ethanolamine. The enzyme catalyses a 1-acyl-sn-glycero-3-phosphocholine = a 1-acyl-sn-glycero-2,3-cyclic phosphate + choline. The catalysed reaction is a 1-acyl-sn-glycero-3-phosphoethanolamine = a 1-acyl-sn-glycero-2,3-cyclic phosphate + ethanolamine. Dermonecrotic toxins cleave the phosphodiester linkage between the phosphate and headgroup of certain phospholipids (sphingolipid and lysolipid substrates), forming an alcohol (often choline) and a cyclic phosphate. This toxin acts on sphingomyelin (SM). It may also act on ceramide phosphoethanolamine (CPE), lysophosphatidylcholine (LPC) and lysophosphatidylethanolamine (LPE), but not on lysophosphatidylserine (LPS), and lysophosphatidylglycerol (LPG). It acts by transphosphatidylation, releasing exclusively cyclic phosphate products as second products. Induces dermonecrosis, hemolysis, increased vascular permeability, edema, inflammatory response, and platelet aggregation. The chain is Dermonecrotic toxin LrSicTox-alphaI-1 from Loxosceles reclusa (Brown recluse spider).